The chain runs to 256 residues: uncharacterized protein (256 aa).

Residues 1 to 24 form the signal peptide; it reads MIKRVNKLVLGISLLFLVISITAG. The N-palmitoyl cysteine moiety is linked to residue Cys-25. Cys-25 is lipidated: S-diacylglycerol cysteine.

Belongs to the staphylococcal tandem lipoprotein family.

It is found in the cell membrane. This is an uncharacterized protein from Staphylococcus aureus (strain NCTC 8325 / PS 47).